The chain runs to 372 residues: Homoserine O-acetyltransferase (372 aa).

The region spanning 43–353 (NAILIFHALT…DKGHDSFLLK (311 aa)) is the AB hydrolase-1 domain. Serine 148 (nucleophile) is an active-site residue. Position 218 (arginine 218) interacts with substrate. Residues aspartate 314 and histidine 347 contribute to the active site. Aspartate 348 is a binding site for substrate.

Belongs to the AB hydrolase superfamily. MetX family. As to quaternary structure, homodimer.

It is found in the cytoplasm. It catalyses the reaction L-homoserine + acetyl-CoA = O-acetyl-L-homoserine + CoA. Its pathway is amino-acid biosynthesis; L-methionine biosynthesis via de novo pathway; O-acetyl-L-homoserine from L-homoserine: step 1/1. Functionally, transfers an acetyl group from acetyl-CoA to L-homoserine, forming acetyl-L-homoserine. The protein is Homoserine O-acetyltransferase of Pelagibacter ubique (strain HTCC1062).